Here is a 1013-residue protein sequence, read N- to C-terminus: MGDKKDDKDSPKKNKGKERRDLDDLKKEVAMTEHKMSVEEVCRKYNTDCVQGLTHSKAQEILARDGPNALTPPPTTPEWVKFCRQLFGGFSILLWIGAILCFLAYGIQAGTEDDPSGDNLYLGIVLAAVVIITGCFSYYQEAKSSKIMESFKNMVPQQALVIREGEKMQVNAEEVVVGDLVEIKGGDRVPADLRIISAHGCKVDNSSLTGESEPQTRSPDCTHDNPLETRNITFFSTNCVEGTARGVVVATGDRTVMGRIATLASGLEVGKTPIAIEIEHFIQLITGVAVFLGVSFFILSLILGYTWLEAVIFLIGIIVANVPEGLLATVTVCLTLTAKRMARKNCLVKNLEAVETLGSTSTICSDKTGTLTQNRMTVAHMWFDNQIHEADTTEDQSGTSFDKSSHTWVALSHIAGLCNRAVFKGGQDNIPVLKRDVAGDASESALLKCIELSSGSVKLMRERNKKVAEIPFNSTNKYQLSIHETEDPNDNRYLLVMKGAPERILDRCSTILLQGKEQPLDEEMKEAFQNAYLELGGLGERVLGFCHYYLPEEQFPKGFAFDCDDVNFTTDNLCFVGLMSMIDPPRAAVPDAVGKCRSAGIKVIMVTGDHPITAKAIAKGVGIISEGNETVEDIAARLNIPVSQVNPRDAKACVIHGTDLKDFTSEQIDEILQNHTEIVFARTSPQQKLIIVEGCQRQGAIVAVTGDGVNDSPALKKADIGVAMGIAGSDVSKQAADMILLDDNFASIVTGVEEGRLIFDNLKKSIAYTLTSNIPEITPFLLFIMANIPLPLGTITILCIDLGTDMVPAISLAYEAAESDIMKRQPRNPRTDKLVNERLISMAYGQIGMIQALGGFFSYFVILAENGFLPGNLVGIRLNWDDRTVNDLEDSYGQQWTYEQRKVVEFTCHTAFFVSIVVVQWADLIICKTRRNSVFQQGMKNKILIFGLFEETALAAFLSYCPGMDVALRMYPLKPSWWFCAFPYSFLIFVYDEIRKLILRRNPGGWVEKETYY.

A disordered region spans residues 1–24; sequence MGDKKDDKDSPKKNKGKERRDLDD. Residues 1 to 77 lie on the Cytoplasmic side of the membrane; that stretch reads MGDKKDDKDS…NALTPPPTTP (77 aa). Phosphoserine is present on residues Ser37 and Ser56. The segment at 72–74 is interaction with phosphoinositide-3 kinase; the sequence is PPP. Residues 78–98 form a helical membrane-spanning segment; the sequence is EWVKFCRQLFGGFSILLWIGA. The Extracellular segment spans residues 99-121; that stretch reads ILCFLAYGIQAGTEDDPSGDNLY. A helical membrane pass occupies residues 122 to 142; the sequence is LGIVLAAVVIITGCFSYYQEA. The Cytoplasmic segment spans residues 143–278; sequence KSSKIMESFK…VGKTPIAIEI (136 aa). Phosphoserine is present on residues Ser218 and Ser265. The chain crosses the membrane as a helical span at residues 279-298; that stretch reads EHFIQLITGVAVFLGVSFFI. At 299–310 the chain is on the extracellular side; sequence LSLILGYTWLEA. A helical membrane pass occupies residues 311 to 328; the sequence is VIFLIGIIVANVPEGLLA. The Cytoplasmic segment spans residues 329 to 762; sequence TVTVCLTLTA…EEGRLIFDNL (434 aa). Asp366 functions as the 4-aspartylphosphate intermediate in the catalytic mechanism. Ser442 carries the phosphoserine modification. Tyr548 carries the post-translational modification Phosphotyrosine. Mg(2+) is bound by residues Asp707 and Asp711. Residues 763–782 traverse the membrane as a helical segment; the sequence is KKSIAYTLTSNIPEITPFLL. The Extracellular portion of the chain corresponds to 783 to 792; it reads FIMANIPLPL. Residues 793-813 traverse the membrane as a helical segment; that stretch reads GTITILCIDLGTDMVPAISLA. Residues 814 to 833 are Cytoplasmic-facing; the sequence is YEAAESDIMKRQPRNPRTDK. Residues 834 to 856 traverse the membrane as a helical segment; that stretch reads LVNERLISMAYGQIGMIQALGGF. The Extracellular portion of the chain corresponds to 857-908; that stretch reads FSYFVILAENGFLPGNLVGIRLNWDDRTVNDLEDSYGQQWTYEQRKVVEFTC. A helical transmembrane segment spans residues 909 to 928; it reads HTAFFVSIVVVQWADLIICK. Residues 929–941 lie on the Cytoplasmic side of the membrane; the sequence is TRRNSVFQQGMKN. Ser933 bears the Phosphoserine; by PKA mark. The helical transmembrane segment at 942–960 threads the bilayer; that stretch reads KILIFGLFEETALAAFLSY. The Extracellular segment spans residues 961 to 975; the sequence is CPGMDVALRMYPLKP. A helical membrane pass occupies residues 976 to 996; it reads SWWFCAFPYSFLIFVYDEIRK. Residues 997 to 1013 lie on the Cytoplasmic side of the membrane; that stretch reads LILRRNPGGWVEKETYY.

Belongs to the cation transport ATPase (P-type) (TC 3.A.3) family. Type IIC subfamily. As to quaternary structure, the sodium/potassium-transporting ATPase is composed of a catalytic alpha subunit, an auxiliary non-catalytic beta subunit and an additional regulatory subunit. Interacts with regulatory subunit FXYD1.

The protein resides in the cell membrane. It catalyses the reaction K(+)(out) + Na(+)(in) + ATP + H2O = K(+)(in) + Na(+)(out) + ADP + phosphate + H(+). In terms of biological role, this is the catalytic component of the active enzyme, which catalyzes the hydrolysis of ATP coupled with the exchange of sodium and potassium ions across the plasma membrane. This action creates the electrochemical gradient of sodium and potassium ions, providing the energy for active transport of various nutrients. In Homo sapiens (Human), this protein is Sodium/potassium-transporting ATPase subunit alpha-3 (ATP1A3).